A 476-amino-acid polypeptide reads, in one-letter code: H2.0-like homeobox protein (476 aa).

3 disordered regions span residues 121-170 (HLPQ…SSKD), 328-401 (WRHS…HQTT), and 413-476 (TASS…LAGL). Residues 158–168 (HHSGSAPAPSS) show a composition bias toward low complexity. The segment at residues 273–332 (RSWSRAVFSNLQRKGLEKRFEIQKYVTKPDRKQLAAMLGLTDAQVKVWFQNRRMKWRHSK) is a DNA-binding region (homeobox). 2 stretches are compositionally biased toward basic and acidic residues: residues 331-346 (SKEA…EAGE) and 355-368 (EGER…RSEG). Residues 369-379 (EAESESSDSES) are compositionally biased toward acidic residues. The span at 386–397 (DTERTEGTERSL) shows a compositional bias: basic and acidic residues. A compositionally biased stretch (low complexity) spans 413–446 (TASSSASGSSFSFSSSSSLGSSNGSAGSASSLGS). The span at 455–464 (HQPSVTSGPQ) shows a compositional bias: polar residues.

It belongs to the H2.0 homeobox family.

Its subcellular location is the nucleus. Transcription factor required for TBX21/T-bet-dependent maturation of Th1 cells as well as maintenance of Th1-specific gene expression. Involved in embryogenesis and hematopoiesis. This chain is H2.0-like homeobox protein (Hlx), found in Rattus norvegicus (Rat).